Here is a 61-residue protein sequence, read N- to C-terminus: Cytotoxin homolog 3 (61 aa).

4 disulfide bridges follow: C3-C22, C15-C39, C43-C54, and C55-C60.

Belongs to the three-finger toxin family. Short-chain subfamily. Orphan group XV sub-subfamily. Expressed by the venom gland.

The protein localises to the secreted. It localises to the target cell membrane. Its function is as follows. Has low cytotoxic activity. This is Cytotoxin homolog 3 from Naja melanoleuca (Forest cobra).